A 244-amino-acid chain; its full sequence is DNA polymerase sliding clamp (244 aa).

Belongs to the PCNA family. In terms of assembly, homotrimer. The subunits circularize to form a toroid; DNA passes through its center. Replication factor C (RFC) is required to load the toroid on the DNA.

Functionally, sliding clamp subunit that acts as a moving platform for DNA processing. Responsible for tethering the catalytic subunit of DNA polymerase and other proteins to DNA during high-speed replication. The protein is DNA polymerase sliding clamp of Methanothrix thermoacetophila (strain DSM 6194 / JCM 14653 / NBRC 101360 / PT) (Methanosaeta thermophila).